The following is a 292-amino-acid chain: Tyrosine isonitrile desaturase (292 aa).

Fe cation-binding residues include H110, D112, and H259.

This sequence belongs to the TfdA dioxygenase family. Requires Fe(2+) as cofactor.

The enzyme catalyses (2S)-3-(4-hydroxyphenyl)-2-isocyanopropanoate + 2-oxoglutarate + O2 = (2E)-3-(4-hydroxyphenyl)-2-isocyanoprop-2-enoate + succinate + CO2 + H2O. In terms of biological role, catalyzes the 2-oxoglutarate-dependent oxidation of tyrosine isonitrile. The chain is Tyrosine isonitrile desaturase from Erwinia amylovora (strain CFBP1430).